Reading from the N-terminus, the 464-residue chain is L-aspartate oxidase (464 aa).

Residues G11–A14 and N40–G47 contribute to the FAD site. The active-site Proton donor/acceptor is R251. FAD is bound by residues E332 and S348–L349.

This sequence belongs to the FAD-dependent oxidoreductase 2 family. NadB subfamily. FAD is required as a cofactor.

Its subcellular location is the cytoplasm. The catalysed reaction is L-aspartate + O2 = iminosuccinate + H2O2. The protein operates within cofactor biosynthesis; NAD(+) biosynthesis; iminoaspartate from L-aspartate (oxidase route): step 1/1. Functionally, catalyzes the oxidation of L-aspartate to iminoaspartate, the first step in the de novo biosynthesis of NAD(+). The protein is L-aspartate oxidase (nadB) of Pyrococcus abyssi (strain GE5 / Orsay).